The sequence spans 219 residues: dTTP/UTP pyrophosphatase (219 aa).

The active-site Proton acceptor is Asp79.

Belongs to the Maf family. YhdE subfamily. Requires a divalent metal cation as cofactor.

It is found in the cytoplasm. The enzyme catalyses dTTP + H2O = dTMP + diphosphate + H(+). The catalysed reaction is UTP + H2O = UMP + diphosphate + H(+). Its function is as follows. Nucleoside triphosphate pyrophosphatase that hydrolyzes dTTP and UTP. May have a dual role in cell division arrest and in preventing the incorporation of modified nucleotides into cellular nucleic acids. This chain is dTTP/UTP pyrophosphatase, found in Oleidesulfovibrio alaskensis (strain ATCC BAA-1058 / DSM 17464 / G20) (Desulfovibrio alaskensis).